The chain runs to 423 residues: Myb-like protein G (423 aa).

Residues 36–90 enclose the HTH myb-type domain; sequence TISKQRENWTDEEHQKFLEALTLFDRDWKKIESFVGSKTVIQIRSHAQKYFIKVQ. A DNA-binding region (H-T-H motif) is located at residues 63–86; sequence WKKIESFVGSKTVIQIRSHAQKYF. Disordered regions lie at residues 93–116, 177–205, and 284–372; these read NTGE…QKQK, QQAV…GTTL, and ISPR…LGNY. Residues 177–202 are compositionally biased toward low complexity; the sequence is QQAVTTAQSSQRNGGLPPNPSSNNGG. Positions 286 to 295 are enriched in polar residues; sequence PRNSTGNINV. A compositionally biased stretch (low complexity) spans 302–354; sequence NNSNNNNNNNNNNNNNNNNNNNNNNNNNNNNNNNNNNNNNNNNNNNNNNNNNN. The segment covering 361–372 has biased composition (polar residues); that stretch reads QNHSNMVNLGNY.

The protein resides in the nucleus. The sequence is that of Myb-like protein G (mybG) from Dictyostelium discoideum (Social amoeba).